The primary structure comprises 899 residues: 1,4-alpha-glucan-branching enzyme 3, chloroplastic/amyloplastic (899 aa).

The N-terminal 49 residues, 1-49 (MVSLSNQTRFSFHPNNLVVSEKRRLGISGVNFPRKIKLKITCFAAERPR), are a transit peptide targeting the chloroplast. Positions 47–67 (RPRQEKQKKKSQSQSTSDAEA) are disordered. Catalysis depends on E612, which acts as the Proton donor.

It belongs to the glycosyl hydrolase 13 family. GlgB subfamily. As to quaternary structure, monomer. In terms of tissue distribution, mostly expressed in flowers and inflorescence, and, to a lower extent, in seedlings, roots, stems, leaves, siliques and seeds.

It localises to the plastid. The protein resides in the chloroplast stroma. It is found in the amyloplast. It catalyses the reaction Transfers a segment of a (1-&gt;4)-alpha-D-glucan chain to a primary hydroxy group in a similar glucan chain.. It participates in glycan biosynthesis; starch biosynthesis. Functionally, catalyzes the formation of the alpha-1,6-glucosidic linkages in starch by scission of a 1,4-alpha-linked oligosaccharide from growing alpha-1,4-glucan chains and the subsequent attachment of the oligosaccharide to the alpha-1,6 position. Essential during embryogenesis. The chain is 1,4-alpha-glucan-branching enzyme 3, chloroplastic/amyloplastic (SBE3) from Arabidopsis thaliana (Mouse-ear cress).